A 427-amino-acid chain; its full sequence is Mitogen-activated protein kinase 8B (427 aa).

A Protein kinase domain is found at tyrosine 26–isoleucine 321. ATP contacts are provided by residues glycine 33 to valine 40 and lysine 55. The active-site Proton acceptor is aspartate 151. Threonine 183 bears the Phosphothreonine mark. A TXY motif is present at residues threonine 183–tyrosine 185. The residue at position 185 (tyrosine 185) is a Phosphotyrosine. The tract at residues isoleucine 372–arginine 427 is disordered. Residues serine 387–serine 403 show a composition bias toward low complexity. A compositionally biased stretch (polar residues) spans threonine 404–glutamate 417.

It belongs to the protein kinase superfamily. CMGC Ser/Thr protein kinase family. MAP kinase subfamily. It depends on Mg(2+) as a cofactor. In terms of processing, dually phosphorylated on Thr-183 and Tyr-185, which activates the enzyme. In terms of tissue distribution, expressed at high levels in the ovary and at lower levels in brain, gill, heart, spleen, liver, kidney, muscle, bladder and gut.

It catalyses the reaction L-seryl-[protein] + ATP = O-phospho-L-seryl-[protein] + ADP + H(+). The enzyme catalyses L-threonyl-[protein] + ATP = O-phospho-L-threonyl-[protein] + ADP + H(+). With respect to regulation, activated by threonine and tyrosine phosphorylation. Responds to activation by environmental stress and pro-inflammatory cytokines by phosphorylating a number of transcription factors, primarily components of AP-1 such as c-Jun and ATF2 and thus regulates AP-1 transcriptional activity. May play a role in the regulation of the circadian clock. This is Mitogen-activated protein kinase 8B (mapk8b) from Cyprinus carpio (Common carp).